The primary structure comprises 379 residues: Nitric oxide reductase FlRd-NAD(+) reductase (379 aa).

This sequence belongs to the FAD-dependent oxidoreductase family. FAD is required as a cofactor.

The protein localises to the cytoplasm. It carries out the reaction 2 reduced [nitric oxide reductase rubredoxin domain] + NAD(+) + H(+) = 2 oxidized [nitric oxide reductase rubredoxin domain] + NADH. It functions in the pathway nitrogen metabolism; nitric oxide reduction. One of at least two accessory proteins for anaerobic nitric oxide (NO) reductase. Reduces the rubredoxin moiety of NO reductase. This is Nitric oxide reductase FlRd-NAD(+) reductase from Pectobacterium atrosepticum (strain SCRI 1043 / ATCC BAA-672) (Erwinia carotovora subsp. atroseptica).